Reading from the N-terminus, the 295-residue chain is Shikimate dehydrogenase (NADP(+)) (295 aa).

Shikimate contacts are provided by residues 24–26 (SRS) and T71. K75 (proton acceptor) is an active-site residue. E87 serves as a coordination point for NADP(+). Shikimate-binding residues include N96 and D111. NADP(+)-binding positions include 136–140 (GAGGA), 160–165 (NRTASR), and M233. Y235 contributes to the shikimate binding site. Position 256 (G256) interacts with NADP(+).

It belongs to the shikimate dehydrogenase family. Homodimer.

The catalysed reaction is shikimate + NADP(+) = 3-dehydroshikimate + NADPH + H(+). Its pathway is metabolic intermediate biosynthesis; chorismate biosynthesis; chorismate from D-erythrose 4-phosphate and phosphoenolpyruvate: step 4/7. Functionally, involved in the biosynthesis of the chorismate, which leads to the biosynthesis of aromatic amino acids. Catalyzes the reversible NADPH linked reduction of 3-dehydroshikimate (DHSA) to yield shikimate (SA). The chain is Shikimate dehydrogenase (NADP(+)) from Cupriavidus taiwanensis (strain DSM 17343 / BCRC 17206 / CCUG 44338 / CIP 107171 / LMG 19424 / R1) (Ralstonia taiwanensis (strain LMG 19424)).